Consider the following 970-residue polypeptide: MSLPLRHALENVTSVDRILEDLLVRFIINCPNEDLSSVERELFHFEEASWFYTDFIKLMNPTLPSLKIKSFAQLIIKLCPLVWKWDIRVDEALQQFSKYKKSIPVRGAAIFNENLSKILLVQGTESDSWSFPRGKISKDENDIDCCIREVKEEIGFDLTDYIDDNQFIERNIQGKNYKIFLISGVSEVFNFKPQVRNEIDKIEWFDFKKISKTMYKSNIKYYLINSMMRPLSMWLRHQRQIKNEDQLKSYAEEQLKLLLGITKEEQIDPGRELLNMLHTAVQANSNNNAVSNGQVPSSQEHQHLKEQSGEHNQQKDQQSSFSSQQQPSIFPSLSEPFANNKNVIPPTMPMANVFMSNPQLFATMNGQPFAPFPFMLPLTNNSNSANPIPTPVPPNFNAPPNPMAFGVPNMHNLSGPAVSQPFSLPPAPLPRDSGYSSSSPGQLLDILNSKKPDSNVQSSKKPKLKILQRGTDLNSIKQNNNDETAHSNSQALLDLLKKPTSSQKTHASKPDTSFLPNDSVSGIQDAEYEDFESSSDEEVETARDERTSLNVDIGVNVMPSEKDSRRSQKEKPRSDANKTNLNASAESNSVEWGPGKSSPSTQSKQNSSVGMQNKYRQEIHIGDSDAYEVFESSSDEEDGKKLEELEQTQGNSKLISQDILKENNFQDGEVPHRDMPTESNKSINETVGLSSTTNTVKKVPKVKILKRGETFASLANDKKAFDSSSNVSSSKDLLQMLRNPISSTVSSNQQSPKSQHLSGDEEIMMMLKRNSVSKPQNSEENASTSSINDANASELLGMLKQKEKDITAPKQPYNVDSYSQKNPAKGLLNILKKNNSTGYPRTEGGPSSEMPTSMKRNDATNNQELDKNSTELLNYLKPKPLNDGYENISNKDSSHELLNILHGNKNSSTFNNNVYATDGYSLASDNNENSSNKLLNMLQNRSSAINEPNFDVRSNGTSGSNELLSILHRK.

The Nudix hydrolase domain maps to 101 to 228; the sequence is KSIPVRGAAI…IKYYLINSMM (128 aa). At S116 the chain carries Phosphoserine. Residues 134 to 155 carry the Nudix box motif; that stretch reads GKISKDENDIDCCIREVKEEIG. Positions 149 and 153 each coordinate Mn(2+). 3 disordered regions span residues 287-341, 417-465, and 499-692; these read NNAV…ANNK, AVSQ…PKLK, and PTSS…LSST. The segment covering 300-314 has biased composition (basic and acidic residues); it reads EHQHLKEQSGEHNQQ. Residues 315-334 are compositionally biased toward low complexity; the sequence is KDQQSSFSSQQQPSIFPSLS. S439 carries the post-translational modification Phosphoserine. The segment covering 499-522 has biased composition (polar residues); the sequence is PTSSQKTHASKPDTSFLPNDSVSG. The span at 526–539 shows a compositional bias: acidic residues; that stretch reads AEYEDFESSSDEEV. The segment covering 560–576 has biased composition (basic and acidic residues); it reads SEKDSRRSQKEKPRSDA. A compositionally biased stretch (polar residues) spans 577-590; sequence NKTNLNASAESNSV. Residues 596-608 are compositionally biased toward low complexity; that stretch reads KSSPSTQSKQNSS. The span at 625–637 shows a compositional bias: acidic residues; sequence DAYEVFESSSDEE. A Phosphothreonine modification is found at T677. Polar residues predominate over residues 677–691; sequence TESNKSINETVGLSS. 6 positions are modified to phosphoserine: S679, S682, S751, S771, S773, and S778. The interval 831–862 is disordered; that stretch reads LKKNNSTGYPRTEGGPSSEMPTSMKRNDATNN.

It belongs to the Nudix hydrolase family. DCP2 subfamily. In terms of assembly, component of the decapping complex composed of DCP1 and DCP2. Interacts with mRNA, LSM2, LSM4 and LSM8. The cofactor is Mn(2+).

Its subcellular location is the cytoplasm. The protein resides in the P-body. Catalytic component of the decapping complex necessary for the degradation of mRNAs, both in normal mRNA turnover and in nonsense-mediated mRNA decay. Removes the 7-methyl guanine cap structure from mRNA molecules, yielding a 5'-phosphorylated mRNA fragment and 7m-GDP. Decapping is the major pathway of mRNA degradation in yeast. It occurs through deadenylation, decapping and subsequent 5' to 3' exonucleolytic decay of the transcript body. This chain is mRNA-decapping enzyme subunit 2 (DCP2), found in Saccharomyces cerevisiae (strain YJM789) (Baker's yeast).